The chain runs to 154 residues: Transcriptional repressor NrdR (154 aa).

The segment at C3–C34 is a zinc-finger region. An ATP-cone domain is found at P49 to E139.

The protein belongs to the NrdR family. It depends on Zn(2+) as a cofactor.

Its function is as follows. Negatively regulates transcription of bacterial ribonucleotide reductase nrd genes and operons by binding to NrdR-boxes. The chain is Transcriptional repressor NrdR from Pseudomonas entomophila (strain L48).